The primary structure comprises 89 residues: Small ribosomal subunit protein uS14 (89 aa).

Belongs to the universal ribosomal protein uS14 family. In terms of assembly, part of the 30S ribosomal subunit. Contacts proteins S3 and S10.

Binds 16S rRNA, required for the assembly of 30S particles and may also be responsible for determining the conformation of the 16S rRNA at the A site. This chain is Small ribosomal subunit protein uS14, found in Chlorobium phaeovibrioides (strain DSM 265 / 1930) (Prosthecochloris vibrioformis (strain DSM 265)).